A 146-amino-acid chain; its full sequence is Holo-[acyl-carrier-protein] synthase (146 aa).

Mg(2+)-binding residues include D9 and E63.

It belongs to the P-Pant transferase superfamily. AcpS family. Mg(2+) serves as cofactor.

The protein localises to the cytoplasm. It catalyses the reaction apo-[ACP] + CoA = holo-[ACP] + adenosine 3',5'-bisphosphate + H(+). Functionally, transfers the 4'-phosphopantetheine moiety from coenzyme A to a Ser of acyl-carrier-protein. This chain is Holo-[acyl-carrier-protein] synthase, found in Burkholderia multivorans (strain ATCC 17616 / 249).